A 428-amino-acid polypeptide reads, in one-letter code: Phosphomethylpyrimidine synthase 2 (428 aa).

Residues asparagine 65, methionine 94, tyrosine 123, histidine 158, 180–182, 221–224, and glutamate 260 each bind substrate; these read SRG and DGMR. Zn(2+) is bound at residue histidine 264. Tyrosine 287 contributes to the substrate binding site. Residue histidine 328 participates in Zn(2+) binding. [4Fe-4S] cluster-binding residues include cysteine 405, cysteine 408, and cysteine 412.

It belongs to the ThiC family. The cofactor is [4Fe-4S] cluster.

The enzyme catalyses 5-amino-1-(5-phospho-beta-D-ribosyl)imidazole + S-adenosyl-L-methionine = 4-amino-2-methyl-5-(phosphooxymethyl)pyrimidine + CO + 5'-deoxyadenosine + formate + L-methionine + 3 H(+). Its pathway is cofactor biosynthesis; thiamine diphosphate biosynthesis. Functionally, catalyzes the synthesis of the hydroxymethylpyrimidine phosphate (HMP-P) moiety of thiamine from aminoimidazole ribotide (AIR) in a radical S-adenosyl-L-methionine (SAM)-dependent reaction. In Methanosarcina barkeri (strain Fusaro / DSM 804), this protein is Phosphomethylpyrimidine synthase 2.